Consider the following 355-residue polypeptide: Holliday junction branch migration complex subunit RuvB (355 aa).

Residues threonine 4–tyrosine 190 are large ATPase domain (RuvB-L). ATP-binding positions include leucine 29, arginine 30, glycine 71, lysine 74, threonine 75, threonine 76, glutamate 137–tyrosine 139, arginine 180, tyrosine 190, and arginine 227. Residue threonine 75 participates in Mg(2+) binding. The segment at aspartate 191–aspartate 261 is small ATPAse domain (RuvB-S). Residues proline 264–alanine 355 form a head domain (RuvB-H) region. 3 residues coordinate DNA: arginine 300, arginine 319, and arginine 324.

The protein belongs to the RuvB family. As to quaternary structure, homohexamer. Forms an RuvA(8)-RuvB(12)-Holliday junction (HJ) complex. HJ DNA is sandwiched between 2 RuvA tetramers; dsDNA enters through RuvA and exits via RuvB. An RuvB hexamer assembles on each DNA strand where it exits the tetramer. Each RuvB hexamer is contacted by two RuvA subunits (via domain III) on 2 adjacent RuvB subunits; this complex drives branch migration. In the full resolvosome a probable DNA-RuvA(4)-RuvB(12)-RuvC(2) complex forms which resolves the HJ.

Its subcellular location is the cytoplasm. The catalysed reaction is ATP + H2O = ADP + phosphate + H(+). Its function is as follows. The RuvA-RuvB-RuvC complex processes Holliday junction (HJ) DNA during genetic recombination and DNA repair, while the RuvA-RuvB complex plays an important role in the rescue of blocked DNA replication forks via replication fork reversal (RFR). RuvA specifically binds to HJ cruciform DNA, conferring on it an open structure. The RuvB hexamer acts as an ATP-dependent pump, pulling dsDNA into and through the RuvAB complex. RuvB forms 2 homohexamers on either side of HJ DNA bound by 1 or 2 RuvA tetramers; 4 subunits per hexamer contact DNA at a time. Coordinated motions by a converter formed by DNA-disengaged RuvB subunits stimulates ATP hydrolysis and nucleotide exchange. Immobilization of the converter enables RuvB to convert the ATP-contained energy into a lever motion, pulling 2 nucleotides of DNA out of the RuvA tetramer per ATP hydrolyzed, thus driving DNA branch migration. The RuvB motors rotate together with the DNA substrate, which together with the progressing nucleotide cycle form the mechanistic basis for DNA recombination by continuous HJ branch migration. Branch migration allows RuvC to scan DNA until it finds its consensus sequence, where it cleaves and resolves cruciform DNA. This is Holliday junction branch migration complex subunit RuvB from Burkholderia vietnamiensis (strain G4 / LMG 22486) (Burkholderia cepacia (strain R1808)).